The primary structure comprises 823 residues: MMSLLPNPDPITVPLVLKLCSFPPPRRLFSLRLRRFTRKSSSLLPLVAVSSLSATAAKPTRWREKPELAESDSISLLNERIRRDLGKRETARPAMDSEEAEKYIHMVKEQQERGLQKLKGIRQGTKAAGDGAFSYKVDPYSLLSGDYVVHKKVGIGRFVGIKFDVPKDSSEPLEYVFIEYADGMAKLPLKQASRLLYRYNLPNETKRPRTLSRLSDTSVWERRKTKGKVAIQKMVVDLMELYLHRLRQKRYPYPKNPIMADFAAQFPYNATPDQKQAFLDVEKDLTERETPMDRLICGDVGFGKTEVALRAIFCVVSTGKQAMVLAPTIVLAKQHYDVISERFSLYPHIKVGLLSRFQTKAEKEEYLEMIKTGHLNIIVGTHSLLGSRVVYSNLGLLVVDEEQRFGVKQKEKIASFKTSVDVLTLSATPIPRTLYLALTGFRDASLISTPPPERIPIKTHLSSFRKEKVIEAIKNELDRGGQVFYVLPRIKGLEEVMDFLEEAFPDIDIAMAHGKQYSKQLEETMERFAQGKIKILICTNIVESGLDIQNANTIIIQDVQQFGLAQLYQLRGRVGRADKEAHAYLFYPDKSLLSDQALERLSALEECRELGQGFQLAEKDMGIRGFGTIFGEQQTGDVGNVGIDLFFEMLFESLSKVEELRIFSVPYDLVKIDININPRLPSEYVNYLENPMEIIHEAEKAAEKDMWSLMQFTENLRRQYGKEPYSMEIILKKLYVRRMAADLGVNRIYASGKMVVMKTNMSKKVFKLITDSMTCDVYRSSLIYEGDQIMAELLLELPREQLLNWMFQCLSELHASLPALIKY.

The N-terminal 53 residues, 1-53, are a transit peptide targeting the chloroplast; that stretch reads MMSLLPNPDPITVPLVLKLCSFPPPRRLFSLRLRRFTRKSSSLLPLVAVSSLS. The Helicase ATP-binding domain occupies 285–447; sequence LTERETPMDR…LTGFRDASLI (163 aa). 298–305 lines the ATP pocket; it reads GDVGFGKT. The DEEQ box signature appears at 400–403; it reads DEEQ. In terms of domain architecture, Helicase C-terminal spans 465–622; the sequence is RKEKVIEAIK…GFQLAEKDMG (158 aa).

The protein belongs to the helicase family.

The protein localises to the plastid. Its subcellular location is the chloroplast. The enzyme catalyses ATP + H2O = ADP + phosphate + H(+). In Arabidopsis thaliana (Mouse-ear cress), this protein is ATP-dependent DNA helicase At3g02060, chloroplastic.